The sequence spans 64 residues: MTRKILAVLLVFTLVACNNAEKYSETDVEDSPMIQERRCEPSGKPCRPLMRIPCCGSCVRGKCA.

Residues 1–20 (MTRKILAVLLVFTLVACNNA) form the signal peptide. The propeptide occupies 21-38 (EKYSETDVEDSPMIQERR). Disulfide bonds link C39-C55, C46-C58, and C54-C63.

It belongs to the neurotoxin 36 family. 02 subfamily. As to expression, expressed by the venom gland.

Its subcellular location is the secreted. Probable ion channel inhibitor. The chain is U6-theraphotoxin-Cg1a from Chilobrachys guangxiensis (Chinese earth tiger tarantula).